The sequence spans 226 residues: 7-cyano-7-deazaguanine synthase (226 aa).

10 to 20 is an ATP binding site; that stretch reads LSGGLDSATAA. Residues cysteine 191, cysteine 199, cysteine 202, and cysteine 205 each contribute to the Zn(2+) site.

The protein belongs to the QueC family. Zn(2+) is required as a cofactor.

It carries out the reaction 7-carboxy-7-deazaguanine + NH4(+) + ATP = 7-cyano-7-deazaguanine + ADP + phosphate + H2O + H(+). It participates in purine metabolism; 7-cyano-7-deazaguanine biosynthesis. In terms of biological role, catalyzes the ATP-dependent conversion of 7-carboxy-7-deazaguanine (CDG) to 7-cyano-7-deazaguanine (preQ(0)). The chain is 7-cyano-7-deazaguanine synthase from Prochlorococcus marinus (strain MIT 9303).